Here is a 368-residue protein sequence, read N- to C-terminus: Phosphate acyltransferase (368 aa).

The protein belongs to the PlsX family. In terms of assembly, homodimer. Probably interacts with PlsY.

Its subcellular location is the cytoplasm. The enzyme catalyses a fatty acyl-[ACP] + phosphate = an acyl phosphate + holo-[ACP]. It participates in lipid metabolism; phospholipid metabolism. Its function is as follows. Catalyzes the reversible formation of acyl-phosphate (acyl-PO(4)) from acyl-[acyl-carrier-protein] (acyl-ACP). This enzyme utilizes acyl-ACP as fatty acyl donor, but not acyl-CoA. This chain is Phosphate acyltransferase, found in Cereibacter sphaeroides (strain ATCC 17025 / ATH 2.4.3) (Rhodobacter sphaeroides).